A 692-amino-acid polypeptide reads, in one-letter code: Zinc finger protein 180 (692 aa).

A KRAB domain is found at 72 to 145 (VNFKIVTVDF…GVKIERFTRD (74 aa)). Glycyl lysine isopeptide (Lys-Gly) (interchain with G-Cter in SUMO2) cross-links involve residues Lys-138, Lys-159, Lys-168, Lys-191, Lys-198, Lys-226, Lys-304, Lys-313, and Lys-330. 12 consecutive C2H2-type zinc fingers follow at residues 353–375 (FECN…QRTH), 381–403 (YECS…QRTH), 409–431 (YRCN…QRTH), 437–459 (YECN…QRTH), 465–487 (YECN…QRIH), 493–515 (YECN…QRTH), 521–543 (FECN…QRTH), 549–571 (YECS…QRIH), 577–599 (YECN…QRTH), 605–627 (YECS…QRTH), 633–655 (FECN…QRTH), and 661–683 (FTCI…QATH).

It belongs to the krueppel C2H2-type zinc-finger protein family.

The protein localises to the nucleus. In terms of biological role, may be involved in transcriptional regulation. The polypeptide is Zinc finger protein 180 (ZNF180) (Homo sapiens (Human)).